Here is a 129-residue protein sequence, read N- to C-terminus: Follitropin subunit beta (129 aa).

The signal sequence occupies residues 1 to 18 (MKSVQFCFLFCCWRATCC). Disulfide bonds link Cys21–Cys69, Cys35–Cys84, Cys38–Cys122, Cys46–Cys100, Cys50–Cys102, and Cys105–Cys112. Residues Asn25 and Asn42 are each glycosylated (N-linked (GlcNAc...) asparagine).

It belongs to the glycoprotein hormones subunit beta family. As to quaternary structure, heterodimer. The active follitropin is a heterodimer composed of an alpha chain/CGA shared with other hormones and a unique beta chain/FSHB shown here.

It localises to the secreted. Together with the alpha chain CGA constitutes follitropin, the follicle-stimulating hormone, and provides its biological specificity to the hormone heterodimer. Binds FSHR, a G protein-coupled receptor, on target cells to activate downstream signaling pathways. Follitropin is involved in follicle development and spermatogenesis in reproductive organs. This Cervus nippon (Sika deer) protein is Follitropin subunit beta (FSHB).